Consider the following 203-residue polypeptide: Large ribosomal subunit protein uL18 (203 aa).

The protein belongs to the universal ribosomal protein uL18 family. Part of the 50S ribosomal subunit. Contacts the 5S and 23S rRNAs.

Functionally, this is one of the proteins that bind and probably mediate the attachment of the 5S RNA into the large ribosomal subunit, where it forms part of the central protuberance. The polypeptide is Large ribosomal subunit protein uL18 (Pyrococcus horikoshii (strain ATCC 700860 / DSM 12428 / JCM 9974 / NBRC 100139 / OT-3)).